A 577-amino-acid chain; its full sequence is Leucine-rich repeat protein soc-2 homolog (577 aa).

Composition is skewed to basic and acidic residues over residues 1 to 10 (MRRTKGRTDS) and 33 to 48 (STAH…EAKK). Residues 1 to 71 (MRRTKGRTDS…PTVKKRSTPS (71 aa)) are disordered. 20 LRR repeats span residues 87–109 (GATR…KELT), 110–131 (SLRE…VGLL), 133–155 (NLET…VKLT), 156–177 (KLKV…IYKL), 179–201 (TLTT…GNLK), 202–223 (LLER…IGQL), 225–246 (HLVT…IGNC), 248–269 (HMTS…IGRL), 271–292 (AMTR…LANC), 294–315 (GIDE…LLSS), 318–339 (NLTS…PPKQ), 342–363 (QVNT…VFNK), 366–387 (YLSK…FGSW), 389–410 (SLVE…IQWL), 412–434 (NLEV…GALR), 435–456 (KLRV…IEYL), 458–479 (SLER…IGYL), 481–502 (SVTY…IGNM), 504–526 (SLEQ…LVLC), and 528–549 (SLQI…IVAG).

It belongs to the SHOC2 family.

In terms of biological role, acts as a Ras effector and participates in MAPK pathway activation. Probably acts as a scaffolding protein in a protein phosphatase complex that specifically dephosphorylates Raf kinase and stimulate Raf activity at specialized signaling complexes upon Ras activation. The sequence is that of Leucine-rich repeat protein soc-2 homolog from Nematostella vectensis (Starlet sea anemone).